We begin with the raw amino-acid sequence, 214 residues long: Protein-L-isoaspartate O-methyltransferase (214 aa).

Serine 63 is a catalytic residue.

The protein belongs to the methyltransferase superfamily. L-isoaspartyl/D-aspartyl protein methyltransferase family.

Its subcellular location is the cytoplasm. The catalysed reaction is [protein]-L-isoaspartate + S-adenosyl-L-methionine = [protein]-L-isoaspartate alpha-methyl ester + S-adenosyl-L-homocysteine. Functionally, catalyzes the methyl esterification of L-isoaspartyl residues in peptides and proteins that result from spontaneous decomposition of normal L-aspartyl and L-asparaginyl residues. It plays a role in the repair and/or degradation of damaged proteins. The polypeptide is Protein-L-isoaspartate O-methyltransferase (Desulfotalea psychrophila (strain LSv54 / DSM 12343)).